A 466-amino-acid chain; its full sequence is Cysteine--tRNA ligase (466 aa).

A Zn(2+)-binding site is contributed by cysteine 29. Residues proline 31–asparagine 41 carry the 'HIGH' region motif. Zn(2+)-binding residues include cysteine 209, histidine 234, and glutamate 238. The 'KMSKS' region motif lies at lysine 266–serine 270. Lysine 269 is an ATP binding site.

Belongs to the class-I aminoacyl-tRNA synthetase family. In terms of assembly, monomer. Requires Zn(2+) as cofactor.

It is found in the cytoplasm. It carries out the reaction tRNA(Cys) + L-cysteine + ATP = L-cysteinyl-tRNA(Cys) + AMP + diphosphate. The polypeptide is Cysteine--tRNA ligase (Lysinibacillus sphaericus (strain C3-41)).